Consider the following 400-residue polypeptide: Transposase for insertion sequence element ISRM3 (400 aa).

It belongs to the transposase mutator family.

Functionally, required for the transposition of the insertion element. This chain is Transposase for insertion sequence element ISRM3, found in Rhizobium meliloti (strain 1021) (Ensifer meliloti).